The sequence spans 371 residues: UDP-N-acetylglucosamine--N-acetylmuramyl-(pentapeptide) pyrophosphoryl-undecaprenol N-acetylglucosamine transferase (371 aa).

UDP-N-acetyl-alpha-D-glucosamine-binding positions include 15-17 (TGG), asparagine 126, arginine 172, serine 199, isoleucine 256, 275-280 (ALTVSE), and glutamine 301.

The protein belongs to the glycosyltransferase 28 family. MurG subfamily.

Its subcellular location is the cell inner membrane. The catalysed reaction is di-trans,octa-cis-undecaprenyl diphospho-N-acetyl-alpha-D-muramoyl-L-alanyl-D-glutamyl-meso-2,6-diaminopimeloyl-D-alanyl-D-alanine + UDP-N-acetyl-alpha-D-glucosamine = di-trans,octa-cis-undecaprenyl diphospho-[N-acetyl-alpha-D-glucosaminyl-(1-&gt;4)]-N-acetyl-alpha-D-muramoyl-L-alanyl-D-glutamyl-meso-2,6-diaminopimeloyl-D-alanyl-D-alanine + UDP + H(+). It participates in cell wall biogenesis; peptidoglycan biosynthesis. Cell wall formation. Catalyzes the transfer of a GlcNAc subunit on undecaprenyl-pyrophosphoryl-MurNAc-pentapeptide (lipid intermediate I) to form undecaprenyl-pyrophosphoryl-MurNAc-(pentapeptide)GlcNAc (lipid intermediate II). The sequence is that of UDP-N-acetylglucosamine--N-acetylmuramyl-(pentapeptide) pyrophosphoryl-undecaprenol N-acetylglucosamine transferase from Francisella tularensis subsp. tularensis (strain FSC 198).